Reading from the N-terminus, the 264-residue chain is H-2 class II histocompatibility antigen, E-D beta chain (264 aa).

Positions 1–31 (MVWLPRVPCVAAVILLLTVLSPPVALVRDTR) are cleaved as a signal peptide. The beta-1 stretch occupies residues 32–121 (PRFLEYVTSE…ISDKFLVRRR (90 aa)). At 32-225 (PRFLEYVTSE…KAQSTSAQNK (194 aa)) the chain is on the extracellular side. Intrachain disulfides connect Cys42-Cys106 and Cys144-Cys200. N-linked (GlcNAc...) asparagine glycosylation is present at Asn46. Residues 122–215 (VEPTVTVYPT…SLTDPVTVEW (94 aa)) form a beta-2 region. Residues 124 to 214 (PTVTVYPTKT…PSLTDPVTVE (91 aa)) enclose the Ig-like C1-type domain. The interval 216–225 (KAQSTSAQNK) is connecting peptide. Residues 226 to 248 (MLSGVGGFVLGLLFLGAGLFIYF) form a helical membrane-spanning segment. Topologically, residues 249-264 (RNQKGQSGLQPTGLLS) are cytoplasmic.

This sequence belongs to the MHC class II family.

The protein localises to the membrane. This is H-2 class II histocompatibility antigen, E-D beta chain from Mus musculus (Mouse).